We begin with the raw amino-acid sequence, 192 residues long: Cell division protein SepF (192 aa).

Residues 154-192 (QEEPAPSNVTTTTQQSEETISESVTAPEPAWGTPVASAI) are disordered. Over residues 162–178 (VTTTTQQSEETISESVT) the composition is skewed to low complexity.

It belongs to the SepF family. As to quaternary structure, homodimer. Interacts with FtsZ.

Its subcellular location is the cytoplasm. Cell division protein that is part of the divisome complex and is recruited early to the Z-ring. Probably stimulates Z-ring formation, perhaps through the cross-linking of FtsZ protofilaments. Its function overlaps with FtsA. This is Cell division protein SepF from Prochlorococcus marinus (strain MIT 9211).